Consider the following 590-residue polypeptide: Laccase-19 (590 aa).

The N-terminal stretch at 1–28 (MEKLSMVTSLLCAITVAVLAVAVVSGEA) is a signal peptide. Plastocyanin-like domains lie at 36-152 (VVHE…PRDG) and 161-315 (KDVP…YAGT). Residues Asn41 and Asn47 are each glycosylated (N-linked (GlcNAc...) asparagine). Cu cation-binding residues include His86 and His88. The N-linked (GlcNAc...) asparagine glycan is linked to Asn120. Positions 131 and 133 each coordinate Cu cation. Residues Asn205, Asn344, Asn378, Asn397, Asn434, and Asn465 are each glycosylated (N-linked (GlcNAc...) asparagine). In terms of domain architecture, Plastocyanin-like 3 spans 424 to 566 (DFPIRPPRPF…ATAFIVEDGP (143 aa)). Asn483, His486, His488, His545, Cys546, His547, His551, and Met556 together coordinate Cu cation. Residues 565–590 (GPTPETSLPPPPPEFKRCGNNGLSQP) are disordered.

This sequence belongs to the multicopper oxidase family. Requires Cu cation as cofactor.

Its subcellular location is the secreted. The protein localises to the extracellular space. The protein resides in the apoplast. The catalysed reaction is 4 hydroquinone + O2 = 4 benzosemiquinone + 2 H2O. Lignin degradation and detoxification of lignin-derived products. The protein is Laccase-19 (LAC19) of Oryza sativa subsp. japonica (Rice).